The primary structure comprises 446 residues: Phosphoglucosamine mutase (446 aa).

Catalysis depends on Ser-100, which acts as the Phosphoserine intermediate. Positions 100, 239, 241, and 243 each coordinate Mg(2+). Ser-100 bears the Phosphoserine mark.

Belongs to the phosphohexose mutase family. Mg(2+) is required as a cofactor. Post-translationally, activated by phosphorylation.

It carries out the reaction alpha-D-glucosamine 1-phosphate = D-glucosamine 6-phosphate. Functionally, catalyzes the conversion of glucosamine-6-phosphate to glucosamine-1-phosphate. This Oceanobacillus iheyensis (strain DSM 14371 / CIP 107618 / JCM 11309 / KCTC 3954 / HTE831) protein is Phosphoglucosamine mutase.